The chain runs to 505 residues: Histidine ammonia-lyase (505 aa).

Positions 141–143 (ASG) form a cross-link, 5-imidazolinone (Ala-Gly). Position 142 is a 2,3-didehydroalanine (Ser) (Ser142).

Belongs to the PAL/histidase family. In terms of processing, contains an active site 4-methylidene-imidazol-5-one (MIO), which is formed autocatalytically by cyclization and dehydration of residues Ala-Ser-Gly.

The protein localises to the cytoplasm. The catalysed reaction is L-histidine = trans-urocanate + NH4(+). It functions in the pathway amino-acid degradation; L-histidine degradation into L-glutamate; N-formimidoyl-L-glutamate from L-histidine: step 1/3. In Bacillus thuringiensis subsp. konkukian (strain 97-27), this protein is Histidine ammonia-lyase.